The sequence spans 608 residues: Glutamine--fructose-6-phosphate aminotransferase [isomerizing] (608 aa).

C2 functions as the Nucleophile; for GATase activity in the catalytic mechanism. The region spanning C2–D218 is the Glutamine amidotransferase type-2 domain. 2 consecutive SIS domains span residues M284–T423 and M456–P598. K603 acts as the For Fru-6P isomerization activity in catalysis.

As to quaternary structure, homodimer.

The protein resides in the cytoplasm. The enzyme catalyses D-fructose 6-phosphate + L-glutamine = D-glucosamine 6-phosphate + L-glutamate. In terms of biological role, catalyzes the first step in hexosamine metabolism, converting fructose-6P into glucosamine-6P using glutamine as a nitrogen source. The sequence is that of Glutamine--fructose-6-phosphate aminotransferase [isomerizing] from Gluconobacter oxydans (strain 621H) (Gluconobacter suboxydans).